Here is a 131-residue protein sequence, read N- to C-terminus: uncharacterized protein (131 aa).

Residues 13 to 32 are disordered; the sequence is TYSPLPEPPPTPALGGQRGP.

This is an uncharacterized protein from Homo sapiens (Human).